The chain runs to 415 residues: Neuromedin-U receptor 2 (415 aa).

Over 1–49 the chain is Extracellular; it reads MSGMEKLQNASWIYQQKLEDPFQKHLNSTEEYLAFLCGPRRSHFFLPVS. Asparagine 9 and asparagine 27 each carry an N-linked (GlcNAc...) asparagine glycan. Residues 50–70 form a helical membrane-spanning segment; sequence VVYVPIFVVGVIGNVLVCLVI. Residues 71-82 lie on the Cytoplasmic side of the membrane; it reads LQHQAMKTPTNY. Residues 83–103 form a helical membrane-spanning segment; sequence YLFSLAVSDLLVLLLGMPLEV. Residues 104-123 lie on the Extracellular side of the membrane; that stretch reads YEMWRNYPFLFGPVGCYFKT. Residues cysteine 119 and cysteine 204 are joined by a disulfide bond. The helical transmembrane segment at 124-146 threads the bilayer; that stretch reads ALFETVCFASILSITTVSVERYV. Residues 147–165 are Cytoplasmic-facing; the sequence is AILHPFRAKLQSTRRRALR. Residues 166 to 186 form a helical membrane-spanning segment; it reads ILGIVWGFSVLFSLPNTSIHG. Over 187–214 the chain is Extracellular; sequence IKFHYFPNGSLVPGSATCTVIKPMWIYN. N-linked (GlcNAc...) asparagine glycosylation occurs at asparagine 194. Residues 215 to 235 form a helical membrane-spanning segment; the sequence is FIIQVTSFLFYLLPMTVISVL. Residues 236 to 265 lie on the Cytoplasmic side of the membrane; sequence YYLMALRLKKDKSLEADEGNANIQRPCRKS. Residues 266–286 form a helical membrane-spanning segment; it reads VNKMLFVLVLVFAICWAPFHI. Residues 287 to 301 lie on the Extracellular side of the membrane; it reads DRLFFSFVEEWSESL. The chain crosses the membrane as a helical span at residues 302-322; that stretch reads AAVFNLVHVVSGVFFYLSSAV. The Cytoplasmic portion of the chain corresponds to 323–415; sequence NPIIYNLLSR…NYQSFHFNKT (93 aa).

It belongs to the G-protein coupled receptor 1 family. In terms of tissue distribution, predominantly expressed in the CNS, particularly in the medulla oblongata, pontine reticular formation, spinal cord, and thalamus. High level in testis whereas lower levels are present in a variety of peripheral tissues including the gastrointestinal tract, genitourinary tract, liver, pancreas, adrenal gland, thyroid gland, lung, trachea, spleen and thymus.

Its subcellular location is the cell membrane. Its function is as follows. Receptor for the neuromedin-U and neuromedin-S neuropeptides. This chain is Neuromedin-U receptor 2 (NMUR2), found in Homo sapiens (Human).